The following is a 532-amino-acid chain: Muscarinic acetylcholine receptor M5 (532 aa).

The Extracellular portion of the chain corresponds to 1–29; it reads MEGDSYHNATTVNGTPVNHQPLERHRLWE. An N-linked (GlcNAc...) asparagine glycan is attached at Asn8. The helical transmembrane segment at 30-53 threads the bilayer; that stretch reads VITIAAVTAVVSLITIVGNVLVMI. The Cytoplasmic portion of the chain corresponds to 54 to 66; the sequence is SFKVNSQLKTVNN. Residues 67 to 87 form a helical membrane-spanning segment; it reads YYLLSLACADLIIGIFSMNLY. Residues 88 to 104 lie on the Extracellular side of the membrane; the sequence is TTYILMGRWALGSLACD. Residues Cys103 and Cys183 are joined by a disulfide bond. A helical membrane pass occupies residues 105-126; it reads LWLALDYVASNASVMNLLVISF. Residues 127–146 lie on the Cytoplasmic side of the membrane; it reads DRYFSITRPLTYRAKRTPKR. A helical transmembrane segment spans residues 147-169; that stretch reads AGIMIGLAWLISFILWAPAILCW. Residues 170–191 lie on the Extracellular side of the membrane; that stretch reads QYLVGKRTVPLDECQIQFLSEP. The helical transmembrane segment at 192–214 threads the bilayer; the sequence is TITFGTAIAAFYIPVSVMTILYC. Topologically, residues 215 to 443 are cytoplasmic; the sequence is RIYRETEKRT…LVKERKAAQT (229 aa). The tract at residues 262 to 294 is disordered; sequence AQRERNQASWSSSRRSTSTTGKPSQATGPSANW. The segment covering 270–281 has biased composition (low complexity); the sequence is SWSSSRRSTSTT. The span at 282-291 shows a compositional bias: polar residues; that stretch reads GKPSQATGPS. The chain crosses the membrane as a helical span at residues 444–464; it reads LSAILLAFIITWTPYNIMVLV. Residues 465 to 478 are Extracellular-facing; sequence STFCDKCVPVTLWH. The chain crosses the membrane as a helical span at residues 479 to 498; sequence LGYWLCYVNSTVNPICYALC. The Cytoplasmic portion of the chain corresponds to 499 to 532; it reads NRTFRKTFKMLLLCRWKKKKVEEKLYWQGNSKLP. A phosphothreonine mark is found at Thr501 and Thr505.

Belongs to the G-protein coupled receptor 1 family. Muscarinic acetylcholine receptor subfamily. CHRM5 sub-subfamily.

It is found in the cell membrane. It localises to the postsynaptic cell membrane. Its function is as follows. The muscarinic acetylcholine receptor mediates various cellular responses, including inhibition of adenylate cyclase, breakdown of phosphoinositides and modulation of potassium channels through the action of G proteins. Primary transducing effect is Pi turnover. This is Muscarinic acetylcholine receptor M5 (CHRM5) from Homo sapiens (Human).